Consider the following 234-residue polypeptide: Zinc transport system ATP-binding protein AdcC (234 aa).

The ABC transporter domain maps to 4-234 (ITVEDLSFYY…HENGQEVGHA (231 aa)). Position 36 to 43 (36 to 43 (GENGAAKT)) interacts with ATP.

It belongs to the ABC transporter superfamily.

Its function is as follows. Part of the ATP-driven transport system AdcABC for zinc. Required for transformability. In Streptococcus pneumoniae (strain ATCC BAA-255 / R6), this protein is Zinc transport system ATP-binding protein AdcC (adcC).